The chain runs to 309 residues: NADH-quinone oxidoreductase subunit C (309 aa).

The segment at 198-309 is disordered; the sequence is LPGDEKAVPP…RTRKKKEDGE (112 aa). Over residues 220-230 the composition is skewed to basic and acidic residues; the sequence is TKGDAKADVPK. Over residues 246–261 the composition is skewed to low complexity; the sequence is DAAAKPVAEAAAPAAT.

This sequence belongs to the complex I 30 kDa subunit family. NDH-1 is composed of 14 different subunits. Subunits NuoB, C, D, E, F, and G constitute the peripheral sector of the complex.

Its subcellular location is the cell inner membrane. The enzyme catalyses a quinone + NADH + 5 H(+)(in) = a quinol + NAD(+) + 4 H(+)(out). Its function is as follows. NDH-1 shuttles electrons from NADH, via FMN and iron-sulfur (Fe-S) centers, to quinones in the respiratory chain. The immediate electron acceptor for the enzyme in this species is believed to be ubiquinone. Couples the redox reaction to proton translocation (for every two electrons transferred, four hydrogen ions are translocated across the cytoplasmic membrane), and thus conserves the redox energy in a proton gradient. The sequence is that of NADH-quinone oxidoreductase subunit C from Novosphingobium aromaticivorans (strain ATCC 700278 / DSM 12444 / CCUG 56034 / CIP 105152 / NBRC 16084 / F199).